A 540-amino-acid chain; its full sequence is MAKTIAYDEEARRGLERGLNALADAVKVTLGPKGRNVVLEKKWGAPTITNDGVSIAKEIELEDPYEKIGAELVKEVAKKTDDVAGDGTTTATVLAQALVREGLRNVAAGANPLGLKRGIEKAVEKVTETLLKGAKEVETKEQIAATAAISAGDQSIGDLIAEAMDKVGNEGVITVEESNTFGLQLELTEGMRFDKGYISGYFVTDPERQEAVLEDPYILLVSSKVSTVKDLLPLLEKVIGAGKPLLIIAEDVEGEALSTLVVNKIRGTFKSVAVKAPGFGDRRKAMLQDMAILTGGQVISEEVGLTLENADLSLLGKARKVVVTKDETTIVEGAGDTDAIAGRVAQIRQEIENSDSDYDREKLQERLAKLAGGVAVIKAGAATEVELKERKHRIEDAVRNAKAAVEEGIVAGGGVTLLQAAPTLDELKLEGDEATGANIVKVALEAPLKQIAFNSGLEPGVVAEKVRNLPAGHGLNAQTGVYEDLLAAGVADPVKVTRSALQNAASIAGLFLTTEAVVADKPEKEKASVPGGGDMGGMDF.

Residues 29–32, 86–90, Gly-413, and Asp-492 contribute to the ATP site; these read TLGP and DGTTT. Residues 521–540 are disordered; it reads KPEKEKASVPGGGDMGGMDF. Gly residues predominate over residues 530 to 540; that stretch reads PGGGDMGGMDF.

This sequence belongs to the chaperonin (HSP60) family. As to quaternary structure, forms a cylinder of 14 subunits composed of two heptameric rings stacked back-to-back. Interacts with the co-chaperonin GroES.

The protein resides in the secreted. It is found in the capsule. It localises to the cell surface. The protein localises to the cell wall. The enzyme catalyses ATP + H2O + a folded polypeptide = ADP + phosphate + an unfolded polypeptide.. Functionally, together with its co-chaperonin GroES, plays an essential role in assisting protein folding. The GroEL-GroES system forms a nano-cage that allows encapsulation of the non-native substrate proteins and provides a physical environment optimized to promote and accelerate protein folding. The protein is Chaperonin GroEL 2 of Mycobacterium tuberculosis (strain ATCC 25177 / H37Ra).